The sequence spans 492 residues: Trigger factor (492 aa).

Residues 164 to 249 form the PPIase FKBP-type domain; that stretch reads GDLVVVDFVG…VSDVRVPRKA (86 aa). A disordered region spans residues 440-492; sequence EAEEDSIGKHDHDHDHKEKASDKPKAKKAAAPKKKAAPKKKAAPKAEKKSSDE. Positions 445-463 are enriched in basic and acidic residues; that stretch reads SIGKHDHDHDHKEKASDKP. Over residues 464-482 the composition is skewed to basic residues; sequence KAKKAAAPKKKAAPKKKAA. Residues 483–492 show a composition bias toward basic and acidic residues; it reads PKAEKKSSDE.

This sequence belongs to the FKBP-type PPIase family. Tig subfamily.

The protein resides in the cytoplasm. It carries out the reaction [protein]-peptidylproline (omega=180) = [protein]-peptidylproline (omega=0). Functionally, involved in protein export. Acts as a chaperone by maintaining the newly synthesized protein in an open conformation. Functions as a peptidyl-prolyl cis-trans isomerase. In Zymomonas mobilis subsp. mobilis (strain ATCC 31821 / ZM4 / CP4), this protein is Trigger factor.